The chain runs to 65 residues: Large ribosomal subunit protein uL29 (65 aa).

Belongs to the universal ribosomal protein uL29 family.

In Hyphomonas neptunium (strain ATCC 15444), this protein is Large ribosomal subunit protein uL29.